The following is a 291-amino-acid chain: 4-hydroxy-tetrahydrodipicolinate synthase (291 aa).

Thr44 provides a ligand contact to pyruvate. The Proton donor/acceptor role is filled by Tyr132. Lys160 (schiff-base intermediate with substrate) is an active-site residue. Ile202 lines the pyruvate pocket.

The protein belongs to the DapA family. As to quaternary structure, homotetramer; dimer of dimers.

The protein localises to the cytoplasm. The catalysed reaction is L-aspartate 4-semialdehyde + pyruvate = (2S,4S)-4-hydroxy-2,3,4,5-tetrahydrodipicolinate + H2O + H(+). Its pathway is amino-acid biosynthesis; L-lysine biosynthesis via DAP pathway; (S)-tetrahydrodipicolinate from L-aspartate: step 3/4. In terms of biological role, catalyzes the condensation of (S)-aspartate-beta-semialdehyde [(S)-ASA] and pyruvate to 4-hydroxy-tetrahydrodipicolinate (HTPA). This chain is 4-hydroxy-tetrahydrodipicolinate synthase, found in Zymomonas mobilis subsp. mobilis (strain ATCC 31821 / ZM4 / CP4).